Consider the following 242-residue polypeptide: RxLR effector protein PexRD15 (242 aa).

An N-terminal signal peptide occupies residues 1–24 (MMKSLYAVNLVLLLLLAFFAPAPA). Positions 48–66 (RLLRAHSSDKEEQKEEEER) match the RxLR-dEER motif.

The protein belongs to the RxLR effector family.

Its subcellular location is the secreted. The protein resides in the host cell membrane. Its function is as follows. Effector that enhances P.infestans colonization of Nicotiana benthamiana leaves. This Phytophthora infestans (strain T30-4) (Potato late blight agent) protein is RxLR effector protein PexRD15.